The chain runs to 71 residues: Exodeoxyribonuclease 7 small subunit (71 aa).

It belongs to the XseB family. Heterooligomer composed of large and small subunits.

Its subcellular location is the cytoplasm. It carries out the reaction Exonucleolytic cleavage in either 5'- to 3'- or 3'- to 5'-direction to yield nucleoside 5'-phosphates.. Functionally, bidirectionally degrades single-stranded DNA into large acid-insoluble oligonucleotides, which are then degraded further into small acid-soluble oligonucleotides. In Streptococcus pyogenes serotype M1, this protein is Exodeoxyribonuclease 7 small subunit.